We begin with the raw amino-acid sequence, 246 residues long: Pyridoxine 5'-phosphate synthase (246 aa).

Asn-12 serves as a coordination point for 3-amino-2-oxopropyl phosphate. Asp-14–His-15 is a 1-deoxy-D-xylulose 5-phosphate binding site. Residue Arg-23 coordinates 3-amino-2-oxopropyl phosphate. The active-site Proton acceptor is the His-48. 2 residues coordinate 1-deoxy-D-xylulose 5-phosphate: Arg-50 and His-55. The active-site Proton acceptor is the Glu-75. Thr-105 lines the 1-deoxy-D-xylulose 5-phosphate pocket. His-196 (proton donor) is an active-site residue. 3-amino-2-oxopropyl phosphate contacts are provided by residues Gly-197 and Gly-218–His-219.

The protein belongs to the PNP synthase family. As to quaternary structure, homooctamer; tetramer of dimers.

Its subcellular location is the cytoplasm. The enzyme catalyses 3-amino-2-oxopropyl phosphate + 1-deoxy-D-xylulose 5-phosphate = pyridoxine 5'-phosphate + phosphate + 2 H2O + H(+). The protein operates within cofactor biosynthesis; pyridoxine 5'-phosphate biosynthesis; pyridoxine 5'-phosphate from D-erythrose 4-phosphate: step 5/5. Functionally, catalyzes the complicated ring closure reaction between the two acyclic compounds 1-deoxy-D-xylulose-5-phosphate (DXP) and 3-amino-2-oxopropyl phosphate (1-amino-acetone-3-phosphate or AAP) to form pyridoxine 5'-phosphate (PNP) and inorganic phosphate. The sequence is that of Pyridoxine 5'-phosphate synthase from Pseudomonas putida (strain W619).